Consider the following 206-residue polypeptide: Threonine efflux protein (206 aa).

A helical membrane pass occupies residues 1–21 (MLMLFLTVAMVHIVALMSPGP). Residues 22–43 (DFFFVSQTAVSRSRKEAMMGVL) are Periplasmic-facing. Residues 44-64 (GITCGVMVWAGIALLGLHLII) traverse the membrane as a helical segment. The Cytoplasmic segment spans residues 65-66 (EK). The chain crosses the membrane as a helical span at residues 67 to 87 (MAWLHTLIMVGGGLYLCWMGY). Residues 88-149 (QMLRGALKKE…VGDNVGTTAR (62 aa)) are Periplasmic-facing. The helical transmembrane segment at 150 to 173 (WGIFALIIVETLAWFTVVASLFAL) threads the bilayer. Residues 174–206 (PQMRRGYQRLAKWIDGFAGALFAGFGIHLIISR) lie on the Cytoplasmic side of the membrane.

This sequence belongs to the Rht family.

The protein resides in the cell inner membrane. In terms of biological role, conducts the efflux of threonine. In Escherichia coli O157:H7, this protein is Threonine efflux protein (rhtC).